The sequence spans 634 residues: Chaperone protein dnaK2 (634 aa).

Position 197 is a phosphothreonine; by autocatalysis (T197). The span at 601-623 (GAAAAESGADAGAAGAGDSSSGD) shows a compositional bias: low complexity. The tract at residues 601–634 (GAAAAESGADAGAAGAGDSSSGDDVIDAEFTESK) is disordered. Positions 624 to 634 (DVIDAEFTESK) are enriched in acidic residues.

Belongs to the heat shock protein 70 family.

Acts as a chaperone. This chain is Chaperone protein dnaK2 (dnaK2), found in Prochlorococcus marinus (strain MIT 9313).